Consider the following 254-residue polypeptide: Transcription factor CAULIFLOWER (254 aa).

The MADS-box domain occupies 1-61 (MGRGRVEMKR…GKLFEYSSES (61 aa)). The K-box domain occupies 90 to 180 (QTNWSMEYSR…TKQIKERESI (91 aa)). Polar residues predominate over residues 182-191 (RTHQNQSEQQ). The tract at residues 182 to 205 (RTHQNQSEQQNRSHHVAPQPQPQL) is disordered.

As to quaternary structure, homodimer capable of binding to CArG-box sequences.

The protein localises to the nucleus. In terms of biological role, probable transcription factor that promotes early floral meristem identity in synergy with APETALA1, FRUITFULL and LEAFY. Is required subsequently for the transition of an inflorescence meristem into a floral meristem. Seems to be partially redundant to the function of APETALA1. The protein is Transcription factor CAULIFLOWER (CAL) of Brassica rapa subsp. chinensis (Pak-choi).